The chain runs to 153 residues: Prostaglandin E synthase (153 aa).

At 1 to 13 (MPSPGLVMESGQV) the chain is on the lumenal side. Residues 14–42 (LPAFLLCSTLLVIKMYAVAVITGQMRLRK) traverse the membrane as a helical segment. Residue R39 coordinates glutathione. Residues 43-61 (KAFANPEDALKRGGLQYYR) lie on the Cytoplasmic side of the membrane. Residues 62–91 (SDPDVERCLRAHRNDMETIYPFLFLGFVYS) traverse the membrane as a helical segment. 74-78 (RNDME) provides a ligand contact to glutathione. At 92–96 (FLGPN) the chain is on the lumenal side. Residues 97 to 120 (PLIAWIHFLVVLTGRVVHTVAYLG) traverse the membrane as a helical segment. Glutathione contacts are provided by H114 and Y118. Residues 121-124 (KLNP) lie on the Cytoplasmic side of the membrane. Residues 125–153 (RLRSGAYVLAQFSCFSMALQILWEVAHHL) form a helical membrane-spanning segment. 127–131 (RSGAY) is a glutathione binding site.

The protein belongs to the MAPEG family. In terms of assembly, homotrimer. The cofactor is glutathione.

It localises to the membrane. Its subcellular location is the cytoplasm. It is found in the perinuclear region. It catalyses the reaction prostaglandin H2 = prostaglandin E2. It carries out the reaction 2-glyceryl-prostaglandin H2 = 2-glyceryl-prostaglandin E2. The enzyme catalyses prostaglandin G2 = (15S)-15-hydroperoxy-prostaglandin E2. The catalysed reaction is 1-chloro-2,4-dinitrobenzene + glutathione = 2,4-dinitrophenyl-S-glutathione + chloride + H(+). It catalyses the reaction (5S)-hydroperoxy-(6E,8Z,11Z,14Z)-eicosatetraenoate + 2 glutathione = (5S)-hydroxy-(6E,8Z,11Z,14Z)-eicosatetraenoate + glutathione disulfide + H2O. It participates in lipid metabolism; prostaglandin biosynthesis. Its activity is regulated as follows. Activity is increased markedly in macrophages and osteoblasts following pro-inflammatory stimuli. Terminal enzyme of the cyclooxygenase (COX)-2-mediated prostaglandin E2 (PGE2) biosynthetic pathway. Catalyzes the glutathione-dependent oxidoreduction of prostaglandin endoperoxide H2 (PGH2) to prostaglandin E2 (PGE2) in response to inflammatory stimuli. Plays a key role in inflammation response, fever and pain. Also catalyzes the oxidoreduction of endocannabinoids into prostaglandin glycerol esters and PGG2 into 15-hydroperoxy-PGE2. In addition, displays low glutathione transferase and glutathione-dependent peroxidase activities, toward 1-chloro-2,4-dinitrobenzene and 5-hydroperoxyicosatetraenoic acid (5-HPETE), respectively. The chain is Prostaglandin E synthase (Ptges) from Mus musculus (Mouse).